Here is a 95-residue protein sequence, read N- to C-terminus: Putative regulatory protein Pmob_0099 (95 aa).

It belongs to the RemA family.

The protein is Putative regulatory protein Pmob_0099 of Petrotoga mobilis (strain DSM 10674 / SJ95).